The primary structure comprises 45 residues: Small, acid-soluble spore protein P (45 aa).

Residues 1–12 (MTERHTAKDIRK) are compositionally biased toward basic and acidic residues. The disordered stretch occupies residues 1 to 45 (MTERHTAKDIRKNAPKGENPGQPEPLSGSKKVKKRNHVSQTNGEG).

It belongs to the SspP family.

The protein localises to the spore core. This is Small, acid-soluble spore protein P from Halalkalibacterium halodurans (strain ATCC BAA-125 / DSM 18197 / FERM 7344 / JCM 9153 / C-125) (Bacillus halodurans).